The following is a 397-amino-acid chain: 8-amino-7-oxononanoate synthase (397 aa).

Residue Arg23 participates in substrate binding. Gly110 to Tyr111 contacts pyridoxal 5'-phosphate. His135 serves as a coordination point for substrate. Residues Ser181, His209, and Thr237 each contribute to the pyridoxal 5'-phosphate site. The residue at position 240 (Lys240) is an N6-(pyridoxal phosphate)lysine. Residue Thr354 coordinates substrate.

It belongs to the class-II pyridoxal-phosphate-dependent aminotransferase family. BioF subfamily. Homodimer. The cofactor is pyridoxal 5'-phosphate.

The enzyme catalyses 6-carboxyhexanoyl-[ACP] + L-alanine + H(+) = (8S)-8-amino-7-oxononanoate + holo-[ACP] + CO2. The protein operates within cofactor biosynthesis; biotin biosynthesis. Functionally, catalyzes the decarboxylative condensation of pimeloyl-[acyl-carrier protein] and L-alanine to produce 8-amino-7-oxononanoate (AON), [acyl-carrier protein], and carbon dioxide. In Anaeromyxobacter sp. (strain Fw109-5), this protein is 8-amino-7-oxononanoate synthase.